Here is a 617-residue protein sequence, read N- to C-terminus: Protein DWARF AND LOW-TILLERING (617 aa).

Disordered regions lie at residues 29–92 (KRGS…HDED) and 159–206 (PSLA…GVPA). Residues 171-187 (KSPSDSSSSSGTDGGSS) show a composition bias toward low complexity. The 387-residue stretch at 208–594 (GQAEREALEL…QPLYTVTAWT (387 aa)) folds into the GRAS domain. A leucine repeat I (LRI) region spans residues 215–295 (LELVRALTAC…LTDDAFGGGD (81 aa)). The VHIID stretch occupies residues 301–366 (LRILNAITPI…VPPAHVRITG (66 aa)). A VHIID motif is present at residues 332–336 (VHVID). The leucine repeat II (LRII) stretch occupies residues 376 to 408 (ETGARLARVAAALGLAFEFHAVVDRLEDVRLWM). The segment at 417–508 (VAVNCVLAMH…EEMFAREIRN (92 aa)) is PFYRE. Residues 511-594 (AFEGPERFER…QPLYTVTAWT (84 aa)) are SAW. Residues 596-617 (AGDGAGGSTVSASTTASHSQQS) are disordered. A compositionally biased stretch (low complexity) spans 603 to 617 (STVSASTTASHSQQS).

The protein belongs to the GRAS family. In terms of assembly, interacts with GSK2. Interacts with SMOS1 (via C-terminus). Phosphorylated on serine and threonine residues by GSK2. Dephosphorylated during response to brassinosteroid. Expressed in the shoot apical meristem (SAM) and elongating cells of young seedlings. Expressed in leaf joints, culms, internodes, stems, young panicles, primary roots and lateral roots.

It localises to the nucleus. In terms of biological role, probable transcription factor that acts as a positive regulator of brassinosteroid (BR) signaling. Functions downstream of BRI1 and GSK2 to modulate BR responses. Acts as a direct target of GSK2 kinase to mediate BR responses. Involved in feedback inhibition of BR biosynthetic genes. Repressed by BZR1. Cooperatively functions in a transactivating complex with SMOS1 to enhance the transcription of the SMOS1 target PHI-1, and regulate plant organ size. Interaction between SMOS1 and DLT is a crosstalk point for auxin and brassinosteroid signaling. This chain is Protein DWARF AND LOW-TILLERING, found in Oryza sativa subsp. japonica (Rice).